Consider the following 57-residue polypeptide: Small hydrophobic protein (57 aa).

Residues Met1–Leu8 lie on the Virion surface side of the membrane. Residues Tyr9–Val29 traverse the membrane as a helical segment. Over Ser30–Leu57 the chain is Intravirion.

Belongs to the rubulavirus small hydrophobic protein family. Interacts with host TNFRSF1A, RIPK1 and IRAK1; these interactions interfere with host NF-kappa-B activation at the level of receptor complexes. Interacts with host protein UBQLN4.

The protein localises to the virion membrane. Its subcellular location is the host cell membrane. Functionally, plays a role in the inhibition of the host NF-kappa-B pathway. This inhibition occurs at the receptor level, by preventing the signaling of TNFR1 as well as IL-1R and TLR3. The sequence is that of Small hydrophobic protein (SH) from Homo sapiens (Human).